Reading from the N-terminus, the 266-residue chain is DNA primase (266 aa).

Residues 244-266 (VTTTTTPSPPKIGSMQTTTKSTT) form a disordered region. Over residues 257–266 (SMQTTTKSTT) the composition is skewed to polar residues.

Belongs to the baculoviridae LEF-1 family. Interacts with LEF-2.

Plays an essential role in viral DNA replication. May generates single-stranded DNA for both leading and lagging strand synthesis. The primase initiates primer synthesis and thereby produces large amount of short RNA primers on the lagging strand that the polymerase elongates using dNTPs. This chain is DNA primase (LEF-1), found in Autographa californica nuclear polyhedrosis virus (AcMNPV).